A 572-amino-acid chain; its full sequence is Urease subunit alpha (572 aa).

The region spanning 134–572 is the Urease domain; sequence GGIDAHVHMI…VSLGQLYFFS (439 aa). Residues histidine 139, histidine 141, and lysine 222 each coordinate Ni(2+). Lysine 222 is subject to N6-carboxylysine. Residue histidine 224 coordinates substrate. Ni(2+) is bound by residues histidine 251 and histidine 277. Histidine 325 acts as the Proton donor in catalysis. Aspartate 365 contributes to the Ni(2+) binding site.

It belongs to the metallo-dependent hydrolases superfamily. Urease alpha subunit family. Heterotrimer of UreA (gamma), UreB (beta) and UreC (alpha) subunits. Three heterotrimers associate to form the active enzyme. The cofactor is Ni cation. Post-translationally, carboxylation allows a single lysine to coordinate two nickel ions.

It localises to the cytoplasm. It carries out the reaction urea + 2 H2O + H(+) = hydrogencarbonate + 2 NH4(+). It functions in the pathway nitrogen metabolism; urea degradation; CO(2) and NH(3) from urea (urease route): step 1/1. This Laribacter hongkongensis (strain HLHK9) protein is Urease subunit alpha.